The chain runs to 152 residues: Superoxide dismutase [Cu-Zn] 2 (152 aa).

2 N-linked (GlcNAc...) asparagine glycosylation sites follow: asparagine 9 and asparagine 33. Cu cation contacts are provided by histidine 45, histidine 47, and histidine 62. Cysteine 56 and cysteine 145 are joined by a disulfide. Residues histidine 62, histidine 70, histidine 79, and aspartate 82 each coordinate Zn(2+). Asparagine 85 is a glycosylation site (N-linked (GlcNAc...) asparagine). Position 119 (histidine 119) interacts with Cu cation.

This sequence belongs to the Cu-Zn superoxide dismutase family. The cofactor is Cu cation. Zn(2+) serves as cofactor. As to expression, expressed in fruits, leaves and pollen grains.

Its subcellular location is the cytoplasm. The protein localises to the endoplasmic reticulum. The enzyme catalyses 2 superoxide + 2 H(+) = H2O2 + O2. Its activity is regulated as follows. Inhibited by KCN and H(2)O(2). Destroys radicals which are normally produced within the cells and which are toxic to biological systems. Probably involved in the protection against oxidative stress during pollen development. This is Superoxide dismutase [Cu-Zn] 2 (OLE5) from Olea europaea (Common olive).